Reading from the N-terminus, the 184-residue chain is GTP cyclohydrolase 1 (184 aa).

Zn(2+) contacts are provided by C75, H78, and C146.

The protein belongs to the GTP cyclohydrolase I family. As to quaternary structure, homomer.

The enzyme catalyses GTP + H2O = 7,8-dihydroneopterin 3'-triphosphate + formate + H(+). The protein operates within cofactor biosynthesis; 7,8-dihydroneopterin triphosphate biosynthesis; 7,8-dihydroneopterin triphosphate from GTP: step 1/1. This chain is GTP cyclohydrolase 1, found in Streptococcus pneumoniae (strain Hungary19A-6).